The sequence spans 352 residues: Pejvakin (352 aa).

The protein belongs to the gasdermin family. Interacts with MAP1LC3B; interaction is direct. Interacts with IQGAP1. Interacts with ROCK2. Interacts with TRIOBP. In terms of tissue distribution, in ear, it is detected in the organ of Corti and the spiral ganglion within the cochlea in the sensory areas of the vestibule (cristae ampullares of the semicircular ducts, and maculae of the saccule and utricle) and in the first 3 relays (cochlear nuclei, superior olivary complex and inferior colliculus) of the afferent auditory pathway. Detected in hair cells of the cochlea and vestibule but not in neurons. In the afferent auditory pathway, it is present in the cell bodies of neurons but not in fiber bundles such as the trapezoid body in the brainstem. Also detected in spiral ganglion cells, which form the auditory nerve and project to the cochlear nuclei in the brainstem. Also present in the cochlear nuclei, the superior olive and the inferior colliculus (at protein level). Expressed in all the adult organs tested: brain, eye, inner ear, heart, lung, kidney, liver, intestine, testis and weakly in skeletal muscle.

The protein localises to the peroxisome membrane. Its subcellular location is the cell projection. The protein resides in the cilium. Functionally, peroxisome-associated protein required to protect auditory hair cells against noise-induced damage. Acts by regulating noise-induced peroxisome proliferation in auditory hair cells and neurons, and promoting autophagic degradation of damaged peroxisomes (pexophagy). Noise overexposure increases reactive oxygen species (ROS) levels, causing oxidative damage to auditory hair cells and resulting in hearing loss. PJVK acts as a ROS sensor that recruits the autophagy machinery to trigger pexophagy of peroxisomes damaged by oxidative stress. In addition to pexophagy, also required to promote peroxisome proliferation in response to sound overstimulation. This Mus musculus (Mouse) protein is Pejvakin.